The primary structure comprises 152 residues: Zinc finger SWIM domain-containing protein 7 (152 aa).

Residues 76 to 114 form an SWIM-type zinc finger; it reads YTCLASCHYCSCPAFSFSVLRKSDSLLCKHLLAIYLSQL.

It belongs to the SWS1 family. In terms of assembly, interacts with RAD51D and XRCC3; involved in homologous recombination repair. Interacts with SWSAP1; they form a functional complex involved in homologous recombination repair and stabilize each other.

The protein resides in the nucleus. Its function is as follows. Involved in early stages of the homologous recombination repair (HRR) pathway of double-stranded DNA breaks arising during DNA replication or induced by DNA-damaging agents. Required for meiotic progression, hence for fertility. This chain is Zinc finger SWIM domain-containing protein 7 (Zswim7), found in Mus musculus (Mouse).